We begin with the raw amino-acid sequence, 203 residues long: Nascent polypeptide-associated complex subunit alpha-like protein 1 (203 aa).

Basic and acidic residues predominate over residues 1 to 23; it reads MTTEEKEILAAKLEEQKIDLDKP. Residues 1–71 form a disordered region; sequence MTTEEKEILA…SEKKSRKAML (71 aa). A compositionally biased stretch (acidic residues) spans 24–50; sequence EVEDDDDNEDDDSDDDDKDDDEADGLD. Position 36 is a phosphoserine (Ser36). In terms of domain architecture, NAC-A/B spans 60–125; the sequence is SRSEKKSRKA…AKIEDLSSQI (66 aa). One can recognise a UBA domain in the interval 158-203; the sequence is EVDEEGVEPKDIELVMTQAGVSRPNAVKALKAADGDIVSAIMELTT.

This sequence belongs to the NAC-alpha family.

Its function is as follows. May promote appropriate targeting of ribosome-nascent polypeptide complexes. This is Nascent polypeptide-associated complex subunit alpha-like protein 1 from Arabidopsis thaliana (Mouse-ear cress).